A 294-amino-acid polypeptide reads, in one-letter code: Holothin acyltransferase (294 aa).

The N-acetyltransferase domain occupies 17 to 146 (WTSKPASLEE…SRLVGIHNQQ (130 aa)).

The enzyme catalyses marinoloyl-CoA C + holothin = thiomarinol C + CoA. It carries out the reaction pseudomonoyl-CoA C + holothin = pseudomonic acid C--holothin + CoA. It functions in the pathway antibiotic biosynthesis. Acyltransferase that catalyzes the formation of pseudomonic acid C-holothin (PAC-holothin), a thiomarinol analog, from pseudomonoyl-CoA C (PAC-CoA) and holothin. Accepts linear CoA substrates of different lengths, including propionyl-, hexanoyl-, octanoyl-, oleoyl- and dodecanoyl-CoA, readily converting all into the corresponding acyl-holothin adducts. In vivo, is probably involved in the biosynthesis of thiomarinol, a naturally occurring double-headed antibiotic. The chain is Holothin acyltransferase from Pseudoalteromonas sp. (strain SANK 73390).